Here is a 278-residue protein sequence, read N- to C-terminus: MSISPQEVKKLRDATGAGFGDCKKALDAVGGDFELAKKKLREMGIASADKRSGRDAKEGRVFSYVNKERVGLLLISCETDFVAMNGDFVTFGNSLIKQLVESGKDSLDEQQELEIKNLAATIKENIHVSKIYISNIASNELVKNYLHGEQSKIGVFIKLRVDDVLKIEDGSLNSLTMDLALHVAAFAPLYLSVGDVCPNYIKEQEEVFMKQMEASGKPENVIKGIVSGKLKKHLGEITLLEQGFVKDDKLTVKEKIEEVSKSILTKIEIIDFKYFSVG.

An involved in Mg(2+) ion dislocation from EF-Tu region spans residues 79–82; the sequence is TDFV.

This sequence belongs to the EF-Ts family.

It is found in the cytoplasm. Its function is as follows. Associates with the EF-Tu.GDP complex and induces the exchange of GDP to GTP. It remains bound to the aminoacyl-tRNA.EF-Tu.GTP complex up to the GTP hydrolysis stage on the ribosome. This Borrelia hermsii (strain HS1 / DAH) protein is Elongation factor Ts.